Here is a 126-residue protein sequence, read N- to C-terminus: Glycine cleavage system H protein (126 aa).

The region spanning 22–104 (VATVGITEYA…YEKAWMVKIE (83 aa)) is the Lipoyl-binding domain. An N6-lipoyllysine modification is found at lysine 63.

Belongs to the GcvH family. The glycine cleavage system is composed of four proteins: P, T, L and H. (R)-lipoate serves as cofactor.

In terms of biological role, the glycine cleavage system catalyzes the degradation of glycine. The H protein shuttles the methylamine group of glycine from the P protein to the T protein. Its function is as follows. Is also involved in protein lipoylation via its role as an octanoyl/lipoyl carrier protein intermediate. This is Glycine cleavage system H protein from Staphylococcus epidermidis (strain ATCC 12228 / FDA PCI 1200).